Here is a 185-residue protein sequence, read N- to C-terminus: F-box protein At1g61340 (185 aa).

The F-box domain maps to 78 to 126 (SRELEDLPLDILVRIICGVEHEDLKQLFHVSKTIREATMIAKQSHFAYS).

The chain is F-box protein At1g61340 from Arabidopsis thaliana (Mouse-ear cress).